The chain runs to 570 residues: Urease subunit alpha (570 aa).

Residues 132 to 570 enclose the Urease domain; sequence GGIDTHVHFL…VPMARRYFLF (439 aa). Residues His-137, His-139, and Lys-220 each coordinate Ni(2+). Lys-220 carries the post-translational modification N6-carboxylysine. His-222 provides a ligand contact to substrate. Residues His-249 and His-275 each contribute to the Ni(2+) site. The active-site Proton donor is the His-323. Residue Asp-363 coordinates Ni(2+).

Belongs to the metallo-dependent hydrolases superfamily. Urease alpha subunit family. Heterotrimer of UreA (gamma), UreB (beta) and UreC (alpha) subunits. Three heterotrimers associate to form the active enzyme. Requires Ni cation as cofactor. Post-translationally, carboxylation allows a single lysine to coordinate two nickel ions.

It localises to the cytoplasm. It carries out the reaction urea + 2 H2O + H(+) = hydrogencarbonate + 2 NH4(+). It participates in nitrogen metabolism; urea degradation; CO(2) and NH(3) from urea (urease route): step 1/1. The polypeptide is Urease subunit alpha (Corynebacterium glutamicum (strain ATCC 13032 / DSM 20300 / JCM 1318 / BCRC 11384 / CCUG 27702 / LMG 3730 / NBRC 12168 / NCIMB 10025 / NRRL B-2784 / 534)).